A 496-amino-acid chain; its full sequence is WD repeat-containing protein 37 (496 aa).

Polar residues-rich tracts occupy residues 1-13 (MPTE…TARQ) and 22-31 (SLSIRRTNSS). The disordered stretch occupies residues 1–50 (MPTESGSCSTARQAKQKRKSHSLSIRRTNSSEQERTGLPREMLEGQDSKL). Residues 32-47 (EQERTGLPREMLEGQD) are compositionally biased toward basic and acidic residues. WD repeat units lie at residues 154-194 (GHRD…CLVK) and 197-236 (GHVG…PTPQ). The interval 238–267 (VADTSQQISGEDEIECSDKDEPDIDGDVSS) is disordered. Positions 247 to 265 (GEDEIECSDKDEPDIDGDV) are enriched in acidic residues. WD repeat units lie at residues 281–320 (SHQG…LVHS), 323–362 (GHDQ…IHSV), 367–405 (GHTD…SPIA), 408–447 (RTDS…LARL), and 454–495 (GHRR…LLQE).

As to quaternary structure, forms homodimers. Interacts with PACS1. Interacts with PACS2.

The protein localises to the cytoplasm. The protein resides in the nucleus. Functionally, required for normal ER Ca2+ handling in lymphocytes. Together with PACS1, it plays an essential role in stabilizing peripheral lymphocyte populations. This chain is WD repeat-containing protein 37 (Wdr37), found in Mus musculus (Mouse).